The chain runs to 229 residues: Uracil-DNA glycosylase (229 aa).

D64 acts as the Proton acceptor in catalysis.

This sequence belongs to the uracil-DNA glycosylase (UDG) superfamily. UNG family.

It localises to the cytoplasm. The enzyme catalyses Hydrolyzes single-stranded DNA or mismatched double-stranded DNA and polynucleotides, releasing free uracil.. Its function is as follows. Excises uracil residues from the DNA which can arise as a result of misincorporation of dUMP residues by DNA polymerase or due to deamination of cytosine. The polypeptide is Uracil-DNA glycosylase (Escherichia coli (strain 55989 / EAEC)).